Reading from the N-terminus, the 270-residue chain is Protein FAM110D (270 aa).

Residues Met1 to Ser16 show a composition bias toward low complexity. Disordered stretches follow at residues Met1 to Ser83, Arg117 to Ala142, and Pro186 to Val244. A compositionally biased stretch (basic residues) spans Arg68–Leu78.

The protein belongs to the FAM110 family.

This chain is Protein FAM110D (FAM110D), found in Bos taurus (Bovine).